Consider the following 398-residue polypeptide: Carbamoyl phosphate synthase large chain (398 aa).

The ATP-grasp domain occupies 1-187 (KLGVPQPEGG…LAKIAAKVIV (187 aa)). The interval 1-255 (KLGVPQPEGG…YKAELAADNV (255 aa)) is carbamoyl phosphate synthetic domain. Positions 32, 71, 73, 78, 103, 104, 105, 106, 146, and 158 each coordinate ATP. The Mg(2+) site is built by Gln-146, Glu-158, and Asn-160. Gln-146, Glu-158, and Asn-160 together coordinate Mn(2+). Positions 254 to 395 (NVLPLTGKVF…NEYHKEMEEE (142 aa)) constitute an MGS-like domain. The allosteric domain stretch occupies residues 256-398 (LPLTGKVFLS…HKEMEEENKV (143 aa)).

This sequence belongs to the CarB family. In terms of assembly, composed of two chains; the small (or glutamine) chain promotes the hydrolysis of glutamine to ammonia, which is used by the large (or ammonia) chain to synthesize carbamoyl phosphate. Tetramer of heterodimers (alpha,beta)4. Mg(2+) is required as a cofactor. Requires Mn(2+) as cofactor.

The enzyme catalyses hydrogencarbonate + L-glutamine + 2 ATP + H2O = carbamoyl phosphate + L-glutamate + 2 ADP + phosphate + 2 H(+). It carries out the reaction hydrogencarbonate + NH4(+) + 2 ATP = carbamoyl phosphate + 2 ADP + phosphate + 2 H(+). It participates in amino-acid biosynthesis; L-arginine biosynthesis; carbamoyl phosphate from bicarbonate: step 1/1. It functions in the pathway pyrimidine metabolism; UMP biosynthesis via de novo pathway; (S)-dihydroorotate from bicarbonate: step 1/3. Large subunit of the glutamine-dependent carbamoyl phosphate synthetase (CPSase). CPSase catalyzes the formation of carbamoyl phosphate from the ammonia moiety of glutamine, carbonate, and phosphate donated by ATP, constituting the first step of 2 biosynthetic pathways, one leading to arginine and/or urea and the other to pyrimidine nucleotides. The large subunit (synthetase) binds the substrates ammonia (free or transferred from glutamine from the small subunit), hydrogencarbonate and ATP and carries out an ATP-coupled ligase reaction, activating hydrogencarbonate by forming carboxy phosphate which reacts with ammonia to form carbamoyl phosphate. This is Carbamoyl phosphate synthase large chain from Methanosarcina barkeri.